We begin with the raw amino-acid sequence, 819 residues long: MAKFNTGSNPTEEAATSSRPFKVAGQSSPSGIQSRKNLFDNQGNASPPAGPSSMPKFGTTKPPLAAKPTYEEKPEKEPKPPFLKPTGGSPRFGTQPNSVSRDPEVKVGFLKPVSPKPTSLTKEDSKPVVLRPPGNKLHNLNQESDLKTPGPKPGPAPPVPENELKPGFSKVAGAKSKFMPAAQDTDSKPRFPRHTFGQKPSLSTEDSQEENTSKNVPVQKGSPVQLGAKSKGAPFKPPKEDPEDKDHGAPSSPFPGVVLKPAASRGSPGLSKNFEEKKEDRKTDLAKNIFLNKLNQEEPARFPKAPSKLTAGTPWGQSQEKEGDKNSATPKQKALPPLSVLGPPPPKPNRPPNVDLTRFRKADSANSATKSQTPYSTTSLPPPPPTHPASQPPLPASHPAHPPVPSLPPRNIKPPLDLKHPINDENQDGVMHSDGTGNLEEEQESEGETYEDIDSSKERDKKREKEEKKRLELERKEQKEREKKEQELKKKFKLTGPIQVIHHAKACCDVKGGKNELSFKQGEDIEIIRITDNPEGKWLGRTARGSYGYIKTTAVEIDYDSLKRKKNSLNAVPPRLVEDDQDVYDDVAEQDAPNSHGQSGSGGMFPPPPTDDEIYDGIEEEDDDDGSVPQVDEKTNAWSWGILKMLKGKDDRKKSIREKPKVSESDNNEGSSLPSQHKQLDVGEEVYDDVDASDFPPPPAEMSQGMSVGRAKTEEKDPKKLKKQEKEEKDLRKKFKYDGEIRVLYSTKVASSLTSKKWGARDLQIKPGESLEVIQSTDDTKVLCRNEEGKYGYVLRSYLVDNDGEIYDDIADGCIYDND.

Over residues 1-45 the composition is skewed to polar residues; that stretch reads MAKFNTGSNPTEEAATSSRPFKVAGQSSPSGIQSRKNLFDNQGNA. The disordered stretch occupies residues 1–490; it reads MAKFNTGSNP…REKKEQELKK (490 aa). Lysine 3 carries the post-translational modification N6-acetyllysine. 2 positions are modified to phosphoserine: serine 28 and serine 46. The span at 69–79 shows a compositional bias: basic and acidic residues; it reads TYEEKPEKEPK. Pro residues predominate over residues 150–160; sequence GPKPGPAPPVP. Serine 222 carries the post-translational modification Phosphoserine. 2 stretches are compositionally biased toward basic and acidic residues: residues 237–248 and 273–285; these read PPKEDPEDKDHG and NFEEKKEDRKTDL. Serine 318 carries the phosphoserine modification. 2 stretches are compositionally biased toward pro residues: residues 342–351 and 380–412; these read GPPPPKPNRP and LPPPPPTHPASQPPLPASHPAHPPVPSLPPRNI. Positions 439–453 are enriched in acidic residues; that stretch reads LEEEQESEGETYEDI. Serine 445 carries the post-translational modification Phosphoserine. Positions 448-495 form a coiled coil; that stretch reads ETYEDIDSSKERDKKREKEEKKRLELERKEQKEREKKEQELKKKFKLT. Over residues 454 to 489 the composition is skewed to basic and acidic residues; it reads DSSKERDKKREKEEKKRLELERKEQKEREKKEQELK. The Nuclear localization signal motif lies at 479-493; it reads KEREKKEQELKKKFK. Positions 499–560 constitute an SH3 1 domain; the sequence is QVIHHAKACC…KTTAVEIDYD (62 aa). A Phosphotyrosine modification is found at tyrosine 559. A phosphoserine mark is found at serine 561 and serine 568. Residues 584–587 carry the SH2-binding; to LCP2 motif; it reads YDDV. Disordered stretches follow at residues 589–635 and 649–728; these read EQDA…DEKT and KDDR…EKEE. Positions 610–626 are enriched in acidic residues; it reads TDDEIYDGIEEEDDDDG. The SH2-binding; to FYN signature appears at 615 to 618; that stretch reads YDGI. Over residues 649 to 664 the composition is skewed to basic and acidic residues; sequence KDDRKKSIREKPKVSE. The span at 668–677 shows a compositional bias: polar residues; sequence NEGSSLPSQH. Residues 682–692 show a composition bias toward acidic residues; sequence VGEEVYDDVDA. Tyrosine 687 carries the phosphotyrosine modification. The short motif at 710-736 is the Nuclear localization signal element; sequence RAKTEEKDPKKLKKQEKEEKDLRKKFK. Over residues 711–728 the composition is skewed to basic and acidic residues; the sequence is AKTEEKDPKKLKKQEKEE. In terms of domain architecture, SH3 2 spans 736-804; that stretch reads KYDGEIRVLY…LRSYLVDNDG (69 aa).

As to quaternary structure, part of a complex consisting of SKAP2, FYB1 and PTPNS1. Part of a complex consisting of SKAP2, FYB1 and PIRB. Part of a complex consisting of SKAP1, FYB1 and CLNK. Interacts with CLNK (via its SH2 domain); this interaction allows SKAP1 and FYB1 to recruit FYN to the complex, thus promoting the phosphorylation of CLNK by FYN. Interacts with FYN. Interacts with LCP2. Interacts with SKAP1. Interacts with SKAP2. Interacts with FASLG. Interacts with EVL. Interacts with TMEM47. Interacts with LCK. In terms of processing, T-cell receptor ligation leads to increased tyrosine phosphorylation. As to expression, expressed in hematopoietic tissues such as myeloid and T-cells, spleen and thymus. Not expressed in B-cells, nor in non-lymphoid tissues. FYB-130 is preferentially expressed in mature T-cells compared to FYB-120, whereas thymocytes showed a greater relative amount of FYB-120. Expressed in podocytes.

The protein localises to the cytoplasm. Its subcellular location is the nucleus. The protein resides in the cell junction. In terms of biological role, acts as an adapter protein of the FYN and LCP2 signaling cascades in T-cells. May play a role in linking T-cell signaling to remodeling of the actin cytoskeleton. Modulates the expression of IL2. Involved in platelet activation. Prevents the degradation of SKAP1 and SKAP2. May be involved in high affinity immunoglobulin epsilon receptor signaling in mast cells. The polypeptide is FYN-binding protein 1 (Fyb1) (Mus musculus (Mouse)).